We begin with the raw amino-acid sequence, 313 residues long: 4-hydroxy-3-methylbut-2-enyl diphosphate reductase (313 aa).

Cys20 is a [4Fe-4S] cluster binding site. Residues His49 and His82 each coordinate (2E)-4-hydroxy-3-methylbut-2-enyl diphosphate. Residues His49 and His82 each coordinate dimethylallyl diphosphate. 2 residues coordinate isopentenyl diphosphate: His49 and His82. Residue Cys104 participates in [4Fe-4S] cluster binding. His132 is a (2E)-4-hydroxy-3-methylbut-2-enyl diphosphate binding site. His132 lines the dimethylallyl diphosphate pocket. Position 132 (His132) interacts with isopentenyl diphosphate. Catalysis depends on Glu134, which acts as the Proton donor. Thr172 is a binding site for (2E)-4-hydroxy-3-methylbut-2-enyl diphosphate. Cys201 contributes to the [4Fe-4S] cluster binding site. Residues Ser229, Ser230, Asn231, and Ser273 each coordinate (2E)-4-hydroxy-3-methylbut-2-enyl diphosphate. Residues Ser229, Ser230, Asn231, and Ser273 each contribute to the dimethylallyl diphosphate site. Ser229, Ser230, Asn231, and Ser273 together coordinate isopentenyl diphosphate.

This sequence belongs to the IspH family. [4Fe-4S] cluster is required as a cofactor.

The enzyme catalyses isopentenyl diphosphate + 2 oxidized [2Fe-2S]-[ferredoxin] + H2O = (2E)-4-hydroxy-3-methylbut-2-enyl diphosphate + 2 reduced [2Fe-2S]-[ferredoxin] + 2 H(+). It carries out the reaction dimethylallyl diphosphate + 2 oxidized [2Fe-2S]-[ferredoxin] + H2O = (2E)-4-hydroxy-3-methylbut-2-enyl diphosphate + 2 reduced [2Fe-2S]-[ferredoxin] + 2 H(+). It functions in the pathway isoprenoid biosynthesis; dimethylallyl diphosphate biosynthesis; dimethylallyl diphosphate from (2E)-4-hydroxy-3-methylbutenyl diphosphate: step 1/1. Its pathway is isoprenoid biosynthesis; isopentenyl diphosphate biosynthesis via DXP pathway; isopentenyl diphosphate from 1-deoxy-D-xylulose 5-phosphate: step 6/6. Catalyzes the conversion of 1-hydroxy-2-methyl-2-(E)-butenyl 4-diphosphate (HMBPP) into a mixture of isopentenyl diphosphate (IPP) and dimethylallyl diphosphate (DMAPP). Acts in the terminal step of the DOXP/MEP pathway for isoprenoid precursor biosynthesis. This Desulfotalea psychrophila (strain LSv54 / DSM 12343) protein is 4-hydroxy-3-methylbut-2-enyl diphosphate reductase.